Reading from the N-terminus, the 188-residue chain is UPF0488 protein C8orf33 homolog (188 aa).

3 disordered regions span residues 1-65, 87-112, and 144-182; these read MAAP…AEAQ, QRPTPKQKEQALGAIRTLRSQRTPLP, and AHSAQVQPVGEAARKKSRRVCRPRPEGRSKGTSDTRDEE. Residue A2 is modified to N-acetylalanine. A Phosphoserine modification is found at S41. Residues 166-182 are compositionally biased toward basic and acidic residues; sequence PRPEGRSKGTSDTRDEE.

It belongs to the UPF0488 family.

This chain is UPF0488 protein C8orf33 homolog, found in Bos taurus (Bovine).